A 485-amino-acid chain; its full sequence is BTB/POZ domain-containing protein YLR108C (485 aa).

The BTB domain occupies 26 to 121; it reads EVFKIRIGQK…LIKEYDYHFT (96 aa).

It is found in the nucleus. The sequence is that of BTB/POZ domain-containing protein YLR108C from Saccharomyces cerevisiae (strain ATCC 204508 / S288c) (Baker's yeast).